The primary structure comprises 102 residues: Large ribosomal subunit protein uL24 (102 aa).

The protein belongs to the universal ribosomal protein uL24 family. As to quaternary structure, part of the 50S ribosomal subunit.

In terms of biological role, one of two assembly initiator proteins, it binds directly to the 5'-end of the 23S rRNA, where it nucleates assembly of the 50S subunit. Functionally, one of the proteins that surrounds the polypeptide exit tunnel on the outside of the subunit. The sequence is that of Large ribosomal subunit protein uL24 from Limosilactobacillus fermentum (strain NBRC 3956 / LMG 18251) (Lactobacillus fermentum).